The sequence spans 147 residues: Immunity protein YxxD (147 aa).

In terms of assembly, probably interacts with cognate toxin YxiD but not with other non-cognate toxins. The interaction inhibits the toxic activity of YxiD.

The protein resides in the cytoplasm. Its function is as follows. Immunity component of one of 6 LXG toxin-immunity modules in this strain. They promote kin selection, mediate competition in biofilms, and drive spatial segregation of different strains, indicating that LXG toxins may help avoid warfare between strains in biofilms. Mediates intercellular competition during biofilm formation; disruption of the operon disadvantages the bacteria, but overexpression of the cognate immunity protein restores growth in competition with wild-type. In situ neutralizes the toxic effect of cognate toxin YxiD. Neutralizes the toxic activity of cognate toxin YxiD upon expression in E.coli. Does not have immunity protein activity on other LXG toxins. The polypeptide is Immunity protein YxxD (yxxD) (Bacillus subtilis (strain 168)).